A 334-amino-acid polypeptide reads, in one-letter code: Protein-glutamate methylesterase/protein-glutamine glutaminase 2 (334 aa).

The region spanning 2-120 is the Response regulatory domain; the sequence is NIGIVNDLPL…GAAGDTTKLL (119 aa). At aspartate 53 the chain carries 4-aspartylphosphate. In terms of domain architecture, CheB-type methylesterase spans 134–334; sequence PGSSRLAGAA…AGELAALARI (201 aa). Active-site residues include serine 157, histidine 184, and aspartate 277.

This sequence belongs to the CheB family. Post-translationally, phosphorylated by CheA. Phosphorylation of the N-terminal regulatory domain activates the methylesterase activity.

The protein localises to the cytoplasm. It carries out the reaction [protein]-L-glutamate 5-O-methyl ester + H2O = L-glutamyl-[protein] + methanol + H(+). The catalysed reaction is L-glutaminyl-[protein] + H2O = L-glutamyl-[protein] + NH4(+). Functionally, involved in chemotaxis. Part of a chemotaxis signal transduction system that modulates chemotaxis in response to various stimuli. Catalyzes the demethylation of specific methylglutamate residues introduced into the chemoreceptors (methyl-accepting chemotaxis proteins or MCP) by CheR. Also mediates the irreversible deamidation of specific glutamine residues to glutamic acid. The sequence is that of Protein-glutamate methylesterase/protein-glutamine glutaminase 2 from Burkholderia orbicola (strain AU 1054).